The sequence spans 62 residues: Inner membrane protein p12 (62 aa).

Residues 16-36 (LLIVAIVVVIMAIMLYYFWWM) traverse the membrane as a helical segment.

It belongs to the asfivirus inner membrane protein p12 family. Homomultimer; disulfide-linked. Not glycosylated.

Its subcellular location is the virion membrane. This chain is Inner membrane protein p12, found in African swine fever virus (isolate Pig/Kenya/KEN-50/1950) (ASFV).